The sequence spans 323 residues: MLATLSQIRAWSTEHLIDAAGYWTETADRWEDVFLQMRNQAHAIAWNGAGGDGLRQRTRADFSTVSGIADQLRRAATIARNGAGTIDAAQRRVMYAVEDAQDAGFNVGEDLSVTDTKTTQPAAVQAARLAQAQALAGDIRLRVGQLVAAENEVSGQLAATTGDVGNVRFAGAPVVAHSAVQLVDFFKQDGPTPPPPGAPHPSGGADGPYSDPITSMMLPPAGTEAPVSDATKRWVDNMVNELAARPPDDPIAVEARRLAFQALHRPCNSAEWTAAVAGFAGSSAGVVGTALAIPAGPADWALLGAALLGVGGSGAAVVNCATK.

Residues 1-45 (MLATLSQIRAWSTEHLIDAAGYWTETADRWEDVFLQMRNQAHAIA) form the signal peptide. The tract at residues 186-227 (FKQDGPTPPPPGAPHPSGGADGPYSDPITSMMLPPAGTEAPV) is disordered. 2 helical membrane passes run 269 to 289 (SAEW…VVGT) and 290 to 310 (ALAI…LLGV).

Its subcellular location is the cell membrane. This is an uncharacterized protein from Mycobacterium tuberculosis (strain CDC 1551 / Oshkosh).